The sequence spans 894 residues: GTPase-activating protein GYP5 (894 aa).

The span at 1–23 (MSSDKSIEKNTDTIASEVHEGDN) shows a compositional bias: basic and acidic residues. Positions 1 to 324 (MSSDKSIEKN…VPPPLEEEMK (324 aa)) are disordered. 2 positions are modified to phosphoserine: Ser25 and Ser30. Phosphothreonine is present on Thr89. A compositionally biased stretch (basic and acidic residues) spans 134–164 (IEKEYDAVKENEKVYADTKEVVSSPENREVT). Polar residues-rich tracts occupy residues 184 to 200 (GTTT…SSEV) and 268 to 279 (SSENEVSAIPTT). A Phosphoserine modification is found at Ser389. The region spanning 451 to 630 (GIPPQIRGII…RIFDIVFVEG (180 aa)) is the Rab-GAP TBC domain. A coiled-coil region spans residues 732–872 (EKEQKKEDHY…INKEQVSTAS (141 aa)).

Belongs to the GYP5 family. Interacts with GYL1 and RVS167; and is part of SEC4-containing complexes.

The protein localises to the cytoplasm. It localises to the bud. It is found in the bud neck. Functionally, GTPase-activating protein which accelerates the GTP hydrolysis rate of YPT1 and SEC4. Involved in ER to Golgi trafficking and polarized exocytosis. In Saccharomyces cerevisiae (strain ATCC 204508 / S288c) (Baker's yeast), this protein is GTPase-activating protein GYP5 (GYP5).